We begin with the raw amino-acid sequence, 100 residues long: Small ribosomal subunit protein uS14c (100 aa).

This sequence belongs to the universal ribosomal protein uS14 family. In terms of assembly, part of the 30S ribosomal subunit.

Its subcellular location is the plastid. The protein resides in the chloroplast. Functionally, binds 16S rRNA, required for the assembly of 30S particles. This chain is Small ribosomal subunit protein uS14c, found in Zygnema circumcarinatum (Green alga).